A 320-amino-acid chain; its full sequence is Replication factor C small subunit 2 (320 aa).

ATP is bound at residue 44–51 (GPPGTGKT).

It belongs to the activator 1 small subunits family. RfcS subfamily. Heteromultimer composed of small subunits (RfcS) and large subunits (RfcL).

In terms of biological role, part of the RFC clamp loader complex which loads the PCNA sliding clamp onto DNA. The sequence is that of Replication factor C small subunit 2 from Pyrobaculum islandicum (strain DSM 4184 / JCM 9189 / GEO3).